We begin with the raw amino-acid sequence, 309 residues long: MASFVMGYFLLFAVAFMCLDARTDKTQDYTSFQYHKGALLTGDVSINLIWYGKFKPSQRAIVTDFVASLSSSRRSTMAQNPSVATWWKTVEKYYQFRKMTTTRGLSLSLGEQILDQGYSMGKSLTEKNLKDLAAKGGQSYAVNVVLTSADVTVQGFCMNRCGSHGTGSGSGKKGSRFAYIWVGNSETQCPGQCAWPFHAPVYGPQSPPLVAPNNDVGLDGMVINLASLMAATATNPFGDGYYQGPKTAPLEAGSACTGVYGKGSYPGYAGELLVDATTGGSYNVKGLNGRKYLLPALFDPKTDSCSTLF.

The first 23 residues, 1-23 (MASFVMGYFLLFAVAFMCLDART), serve as a signal peptide directing secretion.

This sequence belongs to the EXORDIUM family.

It localises to the secreted. It is found in the extracellular space. The protein localises to the apoplast. In terms of biological role, may play a role in a brassinosteroid-dependent regulatory pathway that controls growth and development under low carbon and energy availability. The polypeptide is Protein EXORDIUM-like 1 (EXL1) (Arabidopsis thaliana (Mouse-ear cress)).